The chain runs to 127 residues: Small ribosomal subunit protein uS11 (127 aa).

This sequence belongs to the universal ribosomal protein uS11 family. As to quaternary structure, part of the 30S ribosomal subunit. Interacts with proteins S7 and S18. Binds to IF-3.

Its function is as follows. Located on the platform of the 30S subunit, it bridges several disparate RNA helices of the 16S rRNA. Forms part of the Shine-Dalgarno cleft in the 70S ribosome. This Lactococcus lactis subsp. lactis (strain IL1403) (Streptococcus lactis) protein is Small ribosomal subunit protein uS11.